A 318-amino-acid polypeptide reads, in one-letter code: Porphobilinogen deaminase (318 aa).

Cys245 carries the S-(dipyrrolylmethanemethyl)cysteine modification.

It belongs to the HMBS family. Monomer. Dipyrromethane is required as a cofactor.

The enzyme catalyses 4 porphobilinogen + H2O = hydroxymethylbilane + 4 NH4(+). It functions in the pathway porphyrin-containing compound metabolism; protoporphyrin-IX biosynthesis; coproporphyrinogen-III from 5-aminolevulinate: step 2/4. It participates in porphyrin-containing compound metabolism; chlorophyll biosynthesis. Functionally, tetrapolymerization of the monopyrrole PBG into the hydroxymethylbilane pre-uroporphyrinogen in several discrete steps. The sequence is that of Porphobilinogen deaminase from Prochlorococcus marinus (strain MIT 9215).